We begin with the raw amino-acid sequence, 346 residues long: Holliday junction branch migration complex subunit RuvB (346 aa).

The tract at residues 1–182 is large ATPase domain (RuvB-L); sequence MKIELLTTPA…FGINSRFDYY (182 aa). ATP contacts are provided by residues Ile21, Arg22, Gly63, Lys66, Thr67, Thr68, 129–131, Arg172, Tyr182, and Arg219; that span reads EDF. Thr67 lines the Mg(2+) pocket. The small ATPAse domain (RuvB-S) stretch occupies residues 183-253; sequence SPDLLEGIVM…IAMKTLECLD (71 aa). The head domain (RuvB-H) stretch occupies residues 256–346; the sequence is EEGLDDMDKK…GLFDADGNLS (91 aa). Arg311 and Arg316 together coordinate DNA.

The protein belongs to the RuvB family. As to quaternary structure, homohexamer. Forms an RuvA(8)-RuvB(12)-Holliday junction (HJ) complex. HJ DNA is sandwiched between 2 RuvA tetramers; dsDNA enters through RuvA and exits via RuvB. An RuvB hexamer assembles on each DNA strand where it exits the tetramer. Each RuvB hexamer is contacted by two RuvA subunits (via domain III) on 2 adjacent RuvB subunits; this complex drives branch migration. In the full resolvosome a probable DNA-RuvA(4)-RuvB(12)-RuvC(2) complex forms which resolves the HJ.

It is found in the cytoplasm. It carries out the reaction ATP + H2O = ADP + phosphate + H(+). Functionally, the RuvA-RuvB-RuvC complex processes Holliday junction (HJ) DNA during genetic recombination and DNA repair, while the RuvA-RuvB complex plays an important role in the rescue of blocked DNA replication forks via replication fork reversal (RFR). RuvA specifically binds to HJ cruciform DNA, conferring on it an open structure. The RuvB hexamer acts as an ATP-dependent pump, pulling dsDNA into and through the RuvAB complex. RuvB forms 2 homohexamers on either side of HJ DNA bound by 1 or 2 RuvA tetramers; 4 subunits per hexamer contact DNA at a time. Coordinated motions by a converter formed by DNA-disengaged RuvB subunits stimulates ATP hydrolysis and nucleotide exchange. Immobilization of the converter enables RuvB to convert the ATP-contained energy into a lever motion, pulling 2 nucleotides of DNA out of the RuvA tetramer per ATP hydrolyzed, thus driving DNA branch migration. The RuvB motors rotate together with the DNA substrate, which together with the progressing nucleotide cycle form the mechanistic basis for DNA recombination by continuous HJ branch migration. Branch migration allows RuvC to scan DNA until it finds its consensus sequence, where it cleaves and resolves cruciform DNA. The protein is Holliday junction branch migration complex subunit RuvB of Chlorobium phaeovibrioides (strain DSM 265 / 1930) (Prosthecochloris vibrioformis (strain DSM 265)).